Here is a 249-residue protein sequence, read N- to C-terminus: tRNA pseudouridine synthase A (249 aa).

D52 acts as the Nucleophile in catalysis. Y110 is a binding site for substrate.

Belongs to the tRNA pseudouridine synthase TruA family. As to quaternary structure, homodimer.

It carries out the reaction uridine(38/39/40) in tRNA = pseudouridine(38/39/40) in tRNA. Its function is as follows. Formation of pseudouridine at positions 38, 39 and 40 in the anticodon stem and loop of transfer RNAs. The chain is tRNA pseudouridine synthase A from Syntrophomonas wolfei subsp. wolfei (strain DSM 2245B / Goettingen).